Here is a 775-residue protein sequence, read N- to C-terminus: 5-methyltetrahydropteroyltriglutamate--homocysteine methyltransferase (775 aa).

Residues 16–19 and lysine 115 contribute to the 5-methyltetrahydropteroyltri-L-glutamate site; that span reads REMK. L-homocysteine contacts are provided by residues 435–437 and glutamate 488; that span reads IGS. Residues 435–437 and glutamate 488 contribute to the L-methionine site; that span reads IGS. 5-methyltetrahydropteroyltri-L-glutamate is bound by residues 519 to 520 and tryptophan 565; that span reads RC. Aspartate 603 is a binding site for L-homocysteine. Position 603 (aspartate 603) interacts with L-methionine. 5-methyltetrahydropteroyltri-L-glutamate is bound at residue glutamate 609. 3 residues coordinate Zn(2+): histidine 645, cysteine 647, and glutamate 669. Histidine 698 serves as the catalytic Proton donor. Residue cysteine 730 coordinates Zn(2+).

The protein belongs to the vitamin-B12 independent methionine synthase family. Zn(2+) serves as cofactor.

The catalysed reaction is 5-methyltetrahydropteroyltri-L-glutamate + L-homocysteine = tetrahydropteroyltri-L-glutamate + L-methionine. It functions in the pathway amino-acid biosynthesis; L-methionine biosynthesis via de novo pathway; L-methionine from L-homocysteine (MetE route): step 1/1. Functionally, catalyzes the transfer of a methyl group from 5-methyltetrahydrofolate to homocysteine resulting in methionine formation. This Coxiella burnetii (strain Dugway 5J108-111) protein is 5-methyltetrahydropteroyltriglutamate--homocysteine methyltransferase.